Here is a 1225-residue protein sequence, read N- to C-terminus: Clustered mitochondria protein homolog (1225 aa).

A disordered region spans residues 1–22; sequence MAQTNGEMEHSKESPEQITNGN. Positions 281 to 532 constitute a Clu domain; the sequence is QESNNQKDLL…RVTPLDVAWN (252 aa). Disordered stretches follow at residues 577–605 and 846–878; these read EEAAKKEKSSEDTESKEEGSEEKSEEALD and ANGVNGTGQDEGSKKKKKNKNGDSGSPARSAAA. TPR repeat units follow at residues 949–982, 991–1024, and 1033–1066; these read AKLYHQLSMLYYQTDEKDAAVELARKAVIVTERT, ILSYLNLSLFEHASGNTKVALAYIKHAMDLWKII, and ITTMNNAAVMLQHLKQYSDSRKWFEASLSVCESL. Over residues 1153–1184 the composition is skewed to polar residues; that stretch reads RTTLGTQIQPQVGQSTADVSAPSQASNSSIDS. A disordered region spans residues 1153–1225; the sequence is RTTLGTQIQP…KLRGSKKSSA (73 aa).

Belongs to the CLU family. May associate with the eukaryotic translation initiation factor 3 (eIF-3) complex.

It is found in the cytoplasm. Functionally, mRNA-binding protein involved in proper cytoplasmic distribution of mitochondria. This is Clustered mitochondria protein homolog from Emericella nidulans (strain FGSC A4 / ATCC 38163 / CBS 112.46 / NRRL 194 / M139) (Aspergillus nidulans).